A 344-amino-acid polypeptide reads, in one-letter code: uncharacterized protein (344 aa).

The disordered stretch occupies residues 95 to 344 (TINPEDANED…TPAKKNSKGR (250 aa)). Positions 103–123 (EDAKVKNSLKLEKEEGSDEKS) are enriched in basic and acidic residues. Positions 135–155 (SDDESDNSNDSEESEAEDSDQ) are enriched in acidic residues. The span at 191–200 (SAKNAKASKP) shows a compositional bias: low complexity. Over residues 244–259 (SEDEDSGSDNSEEESE) the composition is skewed to acidic residues. Positions 265–276 (ASSKKPPSKSSK) are enriched in basic residues. Residues 281–314 (EDEDEDSGQSESEHSEEESNSDEDSGQSEEESEE) are compositionally biased toward acidic residues. Residues 331–344 (TAKKTPAKKNSKGR) show a composition bias toward basic residues.

This is an uncharacterized protein from Acanthamoeba polyphaga (Amoeba).